Here is a 561-residue protein sequence, read N- to C-terminus: MAASAKRKQEEKHLKMLRDMTGLPHNRKCFDCDQRGPTYVNMTVGSFVCTSCSGSLRGLNPPHRVKSISMTTFTQQEIEFLQKHGNEVCKQIWLGLFDDRSSAIPDFRDPQKVKEFLQEKYEKKRWYVPPEQAKVVASVHASISGSSASSTSSTPEVKPLKSLLGESAPALHLNKGTPSQSPVVGRSQGQQQEKKQFDLLSDLGSDIFAAPAPQSTATANFANFAHFNSHAAQNSANADFANFDAFGQSSGSSNFGGFPTASHSSFQPQTTGGSAGSVNANFAHFDNFPKSSSADFGTFSTSQSHQTASTVSKVSTNKAGLQTADKYAALANLDNIFSAGQGGDQGSGFGTTGKAPVGSVVSVPSHSSASSDKYAALAELDSVFSSAATSSNAYTPTSNASSSVFGTVPVGASAQTQPASSGPAPFGATPSTNPFVAATGPSAASSTNPFQTNARGATAATFGTASMSMPAGFGTPAQYSLPTSFSGSFQQPAFPAQAAFPQQTAFSQQPNGAGFATFGQTKPVVTPFGQVAAAGVSSNPFMTGAPTGQLPTGSSSTNPFL.

Positions 11-135 (EKHLKMLRDM…WYVPPEQAKV (125 aa)) constitute an Arf-GAP domain. The C4-type zinc finger occupies 29–52 (CFDCDQRGPTYVNMTVGSFVCTSC). Residue S167 is modified to Phosphoserine. Positions 170 to 193 (ALHLNKGTPSQSPVVGRSQGQQQE) are disordered. A compositionally biased stretch (polar residues) spans 176 to 191 (GTPSQSPVVGRSQGQQ). Residue T177 is modified to Phosphothreonine. Phosphoserine is present on residues S181 and S362. Residue S367 is glycosylated (O-linked (GlcNAc) serine). Residues 413-433 (SAQTQPASSGPAPFGATPSTN) form a disordered region.

As to quaternary structure, interacts with FCHO1. Interacts with EPS15R and EPS15. In terms of processing, O-glycosylated. As to expression, expressed in the testes (at protein level).

It is found in the nucleus. The protein resides in the cytoplasmic vesicle. Required for vesicle docking or fusion during acrosome biogenesis. May play a role in RNA trafficking or localization. This chain is Arf-GAP domain and FG repeat-containing protein 1 (Agfg1), found in Mus musculus (Mouse).